The following is a 298-amino-acid chain: Protoheme IX farnesyltransferase (298 aa).

Transmembrane regions (helical) follow at residues 26–46 (VVSLIVFTAVIGMFLSVPGAV), 52–72 (IFGTVGISLVAGAAAALNCLV), 93–113 (VSVPETLFFLVLIGGFGLFML), 120–140 (LTMWLTLGTFVGYAIIYTVIL), 148–168 (IVIGGASGAMPPVLGWAAVTG), 174–194 (ALLLFLIIFAWTPPHFWALAL), 219–239 (LHVLLYTIILCVVTVLPYLTQ), 241–261 (SGLIYLGSVLILDAIFFYYAI), and 278–298 (YSIAYLALLFTALLVDHYFYF).

Belongs to the UbiA prenyltransferase family. Protoheme IX farnesyltransferase subfamily.

It localises to the cell inner membrane. It catalyses the reaction heme b + (2E,6E)-farnesyl diphosphate + H2O = Fe(II)-heme o + diphosphate. It participates in porphyrin-containing compound metabolism; heme O biosynthesis; heme O from protoheme: step 1/1. Converts heme B (protoheme IX) to heme O by substitution of the vinyl group on carbon 2 of heme B porphyrin ring with a hydroxyethyl farnesyl side group. The chain is Protoheme IX farnesyltransferase from Nitrosomonas europaea (strain ATCC 19718 / CIP 103999 / KCTC 2705 / NBRC 14298).